Reading from the N-terminus, the 333-residue chain is UDP-N-acetylglucosamine--N-acetylmuramyl-(pentapeptide) pyrophosphoryl-undecaprenol N-acetylglucosamine transferase (333 aa).

UDP-N-acetyl-alpha-D-glucosamine contacts are provided by residues 10–12 (TGG), asparagine 124, serine 177, and glutamine 275.

The protein belongs to the glycosyltransferase 28 family. MurG subfamily.

It is found in the cell inner membrane. It catalyses the reaction di-trans,octa-cis-undecaprenyl diphospho-N-acetyl-alpha-D-muramoyl-L-alanyl-D-glutamyl-meso-2,6-diaminopimeloyl-D-alanyl-D-alanine + UDP-N-acetyl-alpha-D-glucosamine = di-trans,octa-cis-undecaprenyl diphospho-[N-acetyl-alpha-D-glucosaminyl-(1-&gt;4)]-N-acetyl-alpha-D-muramoyl-L-alanyl-D-glutamyl-meso-2,6-diaminopimeloyl-D-alanyl-D-alanine + UDP + H(+). Its pathway is cell wall biogenesis; peptidoglycan biosynthesis. Cell wall formation. Catalyzes the transfer of a GlcNAc subunit on undecaprenyl-pyrophosphoryl-MurNAc-pentapeptide (lipid intermediate I) to form undecaprenyl-pyrophosphoryl-MurNAc-(pentapeptide)GlcNAc (lipid intermediate II). The protein is UDP-N-acetylglucosamine--N-acetylmuramyl-(pentapeptide) pyrophosphoryl-undecaprenol N-acetylglucosamine transferase of Nitratiruptor sp. (strain SB155-2).